The following is a 231-amino-acid chain: Small ribosomal subunit protein uS3 (231 aa).

The KH type-2 domain occupies 39–107; the sequence is VREFLKEKLK…PAQINIAEVR (69 aa).

It belongs to the universal ribosomal protein uS3 family. Part of the 30S ribosomal subunit. Forms a tight complex with proteins S10 and S14.

Binds the lower part of the 30S subunit head. Binds mRNA in the 70S ribosome, positioning it for translation. The polypeptide is Small ribosomal subunit protein uS3 (Colwellia psychrerythraea (strain 34H / ATCC BAA-681) (Vibrio psychroerythus)).